The sequence spans 395 residues: S-adenosylmethionine synthase 3 (395 aa).

A Mg(2+)-binding site is contributed by Glu10. ATP is bound at residue His16. Glu44 serves as a coordination point for K(+). L-methionine contacts are provided by Glu57 and Gln100. Residues 168 to 170 (DGK), 236 to 239 (SGRF), Asp247, 253 to 254 (RK), Ala270, Lys274, and Lys278 contribute to the ATP site. Position 247 (Asp247) interacts with L-methionine. Lys278 is an L-methionine binding site.

This sequence belongs to the AdoMet synthase family. Homotetramer. The cofactor is Mn(2+). Mg(2+) is required as a cofactor. Co(2+) serves as cofactor. It depends on K(+) as a cofactor.

It localises to the cytoplasm. The enzyme catalyses L-methionine + ATP + H2O = S-adenosyl-L-methionine + phosphate + diphosphate. The protein operates within amino-acid biosynthesis; S-adenosyl-L-methionine biosynthesis; S-adenosyl-L-methionine from L-methionine: step 1/1. In terms of biological role, catalyzes the formation of S-adenosylmethionine from methionine and ATP. The reaction comprises two steps that are both catalyzed by the same enzyme: formation of S-adenosylmethionine (AdoMet) and triphosphate, and subsequent hydrolysis of the triphosphate. The chain is S-adenosylmethionine synthase 3 (METK3) from Populus trichocarpa (Western balsam poplar).